The sequence spans 342 residues: Thymidylate synthase (342 aa).

Residues arginine 31 and 156–157 contribute to the dUMP site; that span reads RR. The active-site Nucleophile is cysteine 176. DUMP is bound by residues 196 to 199, asparagine 207, and 237 to 239; these read RSGD and HVY. Aspartate 199 is a (6R)-5,10-methylene-5,6,7,8-tetrahydrofolate binding site. Alanine 341 is a binding site for (6R)-5,10-methylene-5,6,7,8-tetrahydrofolate.

Belongs to the thymidylate synthase family. Bacterial-type ThyA subfamily. As to quaternary structure, homodimer.

It is found in the cytoplasm. It carries out the reaction dUMP + (6R)-5,10-methylene-5,6,7,8-tetrahydrofolate = 7,8-dihydrofolate + dTMP. It participates in pyrimidine metabolism; dTTP biosynthesis. Its function is as follows. Catalyzes the reductive methylation of 2'-deoxyuridine-5'-monophosphate (dUMP) to 2'-deoxythymidine-5'-monophosphate (dTMP) while utilizing 5,10-methylenetetrahydrofolate (mTHF) as the methyl donor and reductant in the reaction, yielding dihydrofolate (DHF) as a by-product. This enzymatic reaction provides an intracellular de novo source of dTMP, an essential precursor for DNA biosynthesis. This is Thymidylate synthase from Haloferax volcanii (Halobacterium volcanii).